Here is a 373-residue protein sequence, read N- to C-terminus: Alpha-1,3-mannosyl-glycoprotein 4-beta-N-acetylglucosaminyltransferase-like protein MGAT4D (373 aa).

The Cytoplasmic portion of the chain corresponds to 1-5 (MKAKN). The helical; Signal-anchor for type II membrane protein transmembrane segment at 6–26 (VNLLFAFVAVLLFGFSCFCIS) threads the bilayer. Topologically, residues 27-373 (RMNQTNNQLI…REQHLKDNYY (347 aa)) are lumenal. 3 N-linked (GlcNAc...) asparagine glycosylation sites follow: Asn-29, Asn-54, and Asn-144.

It belongs to the glycosyltransferase 54 family. In terms of assembly, isoform 2 self-associates; specifically in the endoplasmic reticulum prior to its translocation to the Golgi. Isoform 1 and isoform 2 interact with MGAT1, MGAT3 and MAN2A2; isoform 2 interacts specifically with MGAT1 in the Golgi. Post-translationally, isoform 2 is N-glycosylated; consisting of high-mannose and/or hybrid glycans. Isoform 1 and isoform 2 are specifically expressed in testis. Isoform 2 is expressed in spermatocytes but not in spermatids. Isoform 1 is expressed in spermatids.

Its subcellular location is the endoplasmic reticulum membrane. It is found in the endoplasmic reticulum-Golgi intermediate compartment membrane. It localises to the golgi apparatus membrane. Its function is as follows. May play a role in male spermatogenesis. In vitro acts as inhibitor of MGAT1 activity causing cell surface proteins to carry mainly high mannose N-glycans. The function is mediated by its lumenal domain and occurs specifically in the Golgi. A catalytic glucosyltransferase activity is not detected. May be involved in regulation of Sertoli-germ cell interactions during specific stages of spermatogenesis. The polypeptide is Alpha-1,3-mannosyl-glycoprotein 4-beta-N-acetylglucosaminyltransferase-like protein MGAT4D (Mus musculus (Mouse)).